We begin with the raw amino-acid sequence, 132 residues long: Cytochrome b5 (132 aa).

One can recognise a Cytochrome b5 heme-binding domain in the interval 2–78 (GKIFTLAEVA…LDEYYVGDID (77 aa)). Residues His-37 and His-61 each contribute to the heme site. A helical transmembrane segment spans residues 104 to 124 (FVIKLLQFLVPLVILAGAIGI).

This sequence belongs to the cytochrome b5 family.

Its subcellular location is the endoplasmic reticulum membrane. It is found in the microsome membrane. In terms of biological role, membrane bound hemoprotein which function as an electron carrier for several membrane bound oxygenases. The protein is Cytochrome b5 of Borago officinalis (Bourrache).